Consider the following 71-residue polypeptide: Translation initiation factor IF-1 (71 aa).

In terms of domain architecture, S1-like spans 1 to 71; the sequence is MSKDDLIQFT…LTKGRVIHRH (71 aa).

Belongs to the IF-1 family. As to quaternary structure, component of the 30S ribosomal translation pre-initiation complex which assembles on the 30S ribosome in the order IF-2 and IF-3, IF-1 and N-formylmethionyl-tRNA(fMet); mRNA recruitment can occur at any time during PIC assembly.

The protein localises to the cytoplasm. In terms of biological role, one of the essential components for the initiation of protein synthesis. Stabilizes the binding of IF-2 and IF-3 on the 30S subunit to which N-formylmethionyl-tRNA(fMet) subsequently binds. Helps modulate mRNA selection, yielding the 30S pre-initiation complex (PIC). Upon addition of the 50S ribosomal subunit IF-1, IF-2 and IF-3 are released leaving the mature 70S translation initiation complex. The sequence is that of Translation initiation factor IF-1 from Rickettsia felis (strain ATCC VR-1525 / URRWXCal2) (Rickettsia azadi).